Here is a 25-residue protein sequence, read N- to C-terminus: Panurgine K (25 aa).

2 cysteine pairs are disulfide-bonded: Cys-8/Cys-23 and Cys-11/Cys-19.

It localises to the target cell membrane. Its subcellular location is the secreted. Functionally, antimicrobial peptide active against Gram-positive bacteria M.luteus (MIC=1.6 uM) and B.subtilis (MIC=3.3 uM). Less active against Gram-negative bacteria E.coli (MIC=63.3 uM) and yeast C.albicans (MIC=24.2 uM). Not active against S.aureus and P.aeruginosa. Has no hemolytic activity against human erythrocytes. Probably acts by disrupting membranes of target cells. This chain is Panurgine K, found in Panurgus calcaratus (Solitary bee).